The chain runs to 415 residues: Homoserine O-succinyltransferase (415 aa).

In terms of domain architecture, AB hydrolase-1 spans 69 to 383; the sequence is NAVLVCHALN…PHGHDAFLLD (315 aa). Ser175 serves as the catalytic Nucleophile. Residue Arg245 coordinates substrate. Catalysis depends on residues Asp344 and His377. Asp378 contributes to the substrate binding site.

The protein belongs to the AB hydrolase superfamily. MetX family. In terms of assembly, homodimer.

The protein localises to the cytoplasm. The catalysed reaction is L-homoserine + succinyl-CoA = O-succinyl-L-homoserine + CoA. Its pathway is amino-acid biosynthesis; L-methionine biosynthesis via de novo pathway; O-succinyl-L-homoserine from L-homoserine: step 1/1. Its function is as follows. Transfers a succinyl group from succinyl-CoA to L-homoserine, forming succinyl-L-homoserine. The chain is Homoserine O-succinyltransferase from Bordetella parapertussis (strain 12822 / ATCC BAA-587 / NCTC 13253).